The primary structure comprises 221 residues: Endo-1,4-beta-xylanase 1 (221 aa).

Positions 1 to 22 (MKFFATIAALVVAAVAAPVAEA) are cleaved as a signal peptide. Residues 29-221 (PMLIERAGPG…GTGSASVTVS (193 aa)) enclose the GH11 domain. The Nucleophile role is filled by E114. Catalysis depends on E208, which acts as the Proton donor.

Belongs to the glycosyl hydrolase 11 (cellulase G) family.

The protein localises to the secreted. The catalysed reaction is Endohydrolysis of (1-&gt;4)-beta-D-xylosidic linkages in xylans.. It participates in glycan degradation; xylan degradation. Functionally, endo-1,4-beta-xylanase involved in the hydrolysis of xylan, a major structural heterogeneous polysaccharide found in plant biomass representing the second most abundant polysaccharide in the biosphere, after cellulose. Hydrolyzes xylans from oat spelt and birchwood at similar rates, but it has no detectable activity toward Avicel or carboxymethyl cellulose. This is Endo-1,4-beta-xylanase 1 (xynI) from Aureobasidium pullulans (Black yeast).